A 207-amino-acid polypeptide reads, in one-letter code: dTTP/UTP pyrophosphatase (207 aa).

Catalysis depends on Asp79, which acts as the Proton acceptor.

It belongs to the Maf family. YhdE subfamily. The cofactor is a divalent metal cation.

It localises to the cytoplasm. It catalyses the reaction dTTP + H2O = dTMP + diphosphate + H(+). It carries out the reaction UTP + H2O = UMP + diphosphate + H(+). Nucleoside triphosphate pyrophosphatase that hydrolyzes dTTP and UTP. May have a dual role in cell division arrest and in preventing the incorporation of modified nucleotides into cellular nucleic acids. This is dTTP/UTP pyrophosphatase from Nitrobacter hamburgensis (strain DSM 10229 / NCIMB 13809 / X14).